Reading from the N-terminus, the 436-residue chain is Glucose-1-phosphate adenylyltransferase (436 aa).

Residues Tyr-112, Gly-178, 193 to 194, and Ser-211 contribute to the alpha-D-glucose 1-phosphate site; that span reads EK.

This sequence belongs to the bacterial/plant glucose-1-phosphate adenylyltransferase family. Homotetramer.

The catalysed reaction is alpha-D-glucose 1-phosphate + ATP + H(+) = ADP-alpha-D-glucose + diphosphate. The protein operates within glycan biosynthesis; glycogen biosynthesis. Involved in the biosynthesis of ADP-glucose, a building block required for the elongation reactions to produce glycogen. Catalyzes the reaction between ATP and alpha-D-glucose 1-phosphate (G1P) to produce pyrophosphate and ADP-Glc. This Histophilus somni (strain 129Pt) (Haemophilus somnus) protein is Glucose-1-phosphate adenylyltransferase.